We begin with the raw amino-acid sequence, 282 residues long: Bifunctional protein FolD (282 aa).

NADP(+)-binding positions include 165 to 167 (NRS), Ser-190, and Ile-231.

This sequence belongs to the tetrahydrofolate dehydrogenase/cyclohydrolase family. As to quaternary structure, homodimer.

The enzyme catalyses (6R)-5,10-methylene-5,6,7,8-tetrahydrofolate + NADP(+) = (6R)-5,10-methenyltetrahydrofolate + NADPH. It carries out the reaction (6R)-5,10-methenyltetrahydrofolate + H2O = (6R)-10-formyltetrahydrofolate + H(+). It participates in one-carbon metabolism; tetrahydrofolate interconversion. Catalyzes the oxidation of 5,10-methylenetetrahydrofolate to 5,10-methenyltetrahydrofolate and then the hydrolysis of 5,10-methenyltetrahydrofolate to 10-formyltetrahydrofolate. This is Bifunctional protein FolD from Clostridium botulinum (strain ATCC 19397 / Type A).